Here is a 378-residue protein sequence, read N- to C-terminus: Ecotin-like protein 3 (378 aa).

Disordered regions lie at residues 191-216 (HRLS…HAAP) and 238-378 (PQNN…KADP). The span at 274-287 (NEPSPSRPRLSSTE) shows a compositional bias: polar residues. Positions 337–348 (RKAEDNVYEKTM) are enriched in basic and acidic residues. The span at 362–378 (KASASSKKSGNGSKADP) shows a compositional bias: low complexity.

Belongs to the protease inhibitor I11 (ecotin) family.

The chain is Ecotin-like protein 3 from Leishmania infantum.